The following is a 607-amino-acid chain: Branchpoint-bridging protein (607 aa).

2 stretches are compositionally biased toward polar residues: residues 1 to 15 (MSWR…NNIP) and 35 to 45 (VTPSAPSSVTN). Disordered stretches follow at residues 1 to 92 (MSWR…TENK) and 134 to 155 (VPAD…GRRV). A compositionally biased stretch (basic and acidic residues) spans 46 to 76 (GDRDRDRDGPVYSNDRDVKRGRSPERSEDGP). Residues 201 to 281 (YVPVNDYPEI…EKVNKAKKLI (81 aa)) form the KH domain. 2 consecutive CCHC-type zinc fingers follow at residues 319 to 336 (QACQ…DCPE) and 344 to 361 (IICR…DCPD). 2 disordered regions span residues 363–390 (QRGA…GGDA) and 407–607 (AAPA…PPGA). The span at 373 to 389 (PGAGRTAGRIGSSGGGD) shows a compositional bias: gly residues. Positions 472-500 (ARDRNERRHDDRDRGDSYYGGDRRHDDYG) are enriched in basic and acidic residues. A compositionally biased stretch (low complexity) spans 521–533 (SAPAIPTAPAYPG). Residues 534 to 545 (AYGGYPGYGAPP) show a composition bias toward gly residues. Composition is skewed to pro residues over residues 550–563 (APPP…PGAP) and 581–607 (APPP…PPGA).

It belongs to the BBP/SF1 family.

The protein resides in the nucleus. Its function is as follows. Necessary for the splicing of pre-mRNA. Has a role in the recognition of the branch site (5'-UACUAAC-3'), the pyrimidine tract and the 3'-splice site at the 3'-end of introns. The protein is Branchpoint-bridging protein (bbp-1) of Neurospora crassa (strain ATCC 24698 / 74-OR23-1A / CBS 708.71 / DSM 1257 / FGSC 987).